The chain runs to 196 residues: Putative AAA family ATPase L572 (196 aa).

ATP is bound at residue 32-39; the sequence is NAVNCKET.

It belongs to the AAA ATPase family.

This Acanthamoeba polyphaga mimivirus (APMV) protein is Putative AAA family ATPase L572.